The sequence spans 359 residues: Protein RecA (359 aa).

ATP is bound at residue 64 to 71; sequence GHESSGKT. A disordered region spans residues 328–359; that stretch reads NKYPNKDSNDSPKEGSKIKTKVNPAVTQDELI. Over residues 331–344 the composition is skewed to basic and acidic residues; that stretch reads PNKDSNDSPKEGSK.

This sequence belongs to the RecA family.

The protein localises to the cytoplasm. Can catalyze the hydrolysis of ATP in the presence of single-stranded DNA, the ATP-dependent uptake of single-stranded DNA by duplex DNA, and the ATP-dependent hybridization of homologous single-stranded DNAs. It interacts with LexA causing its activation and leading to its autocatalytic cleavage. The chain is Protein RecA from Francisella tularensis subsp. novicida (strain U112).